Here is a 272-residue protein sequence, read N- to C-terminus: Small ribosomal subunit biogenesis GTPase RsgA (272 aa).

A CP-type G domain is found at 56–207 (KNILIRPKVA…IIDTPGFSSI (152 aa)). GTP-binding positions include 105–108 (TKAD) and 151–159 (GQSGVGKTT). Residues Cys-230, Cys-235, His-237, and Cys-245 each coordinate Zn(2+).

The protein belongs to the TRAFAC class YlqF/YawG GTPase family. RsgA subfamily. As to quaternary structure, monomer. Associates with 30S ribosomal subunit, binds 16S rRNA. Requires Zn(2+) as cofactor.

The protein localises to the cytoplasm. Functionally, one of several proteins that assist in the late maturation steps of the functional core of the 30S ribosomal subunit. Helps release RbfA from mature subunits. May play a role in the assembly of ribosomal proteins into the subunit. Circularly permuted GTPase that catalyzes slow GTP hydrolysis, GTPase activity is stimulated by the 30S ribosomal subunit. The sequence is that of Small ribosomal subunit biogenesis GTPase RsgA from Mycoplasmopsis pulmonis (strain UAB CTIP) (Mycoplasma pulmonis).